We begin with the raw amino-acid sequence, 175 residues long: Probable S-adenosyl-L-methionine-binding protein VirR (175 aa).

Positions 35-165 (LFFVGKIRTP…DRSLSKPLAP (131 aa)) constitute a TsaA-like domain. Residues 52–54 (PRQ), 90–91 (HE), Arg-114, Thr-124, and 145–148 (LDGT) contribute to the S-adenosyl-L-methionine site.

It belongs to the tRNA methyltransferase O family.

In Rhizobium radiobacter (Agrobacterium tumefaciens), this protein is Probable S-adenosyl-L-methionine-binding protein VirR (virR).